A 398-amino-acid polypeptide reads, in one-letter code: Acetate kinase (398 aa).

Asparagine 7 provides a ligand contact to Mg(2+). Lysine 14 is a binding site for ATP. Arginine 92 lines the substrate pocket. Aspartate 149 (proton donor/acceptor) is an active-site residue. ATP is bound by residues 208–212 (HLGNG), 283–285 (DCR), and 331–335 (GIGEN). Glutamate 385 contributes to the Mg(2+) binding site.

This sequence belongs to the acetokinase family. Homodimer. The cofactor is Mg(2+). Mn(2+) serves as cofactor.

It is found in the cytoplasm. It carries out the reaction acetate + ATP = acetyl phosphate + ADP. The protein operates within metabolic intermediate biosynthesis; acetyl-CoA biosynthesis; acetyl-CoA from acetate: step 1/2. Catalyzes the formation of acetyl phosphate from acetate and ATP. Can also catalyze the reverse reaction. The protein is Acetate kinase of Fusobacterium nucleatum subsp. nucleatum (strain ATCC 25586 / DSM 15643 / BCRC 10681 / CIP 101130 / JCM 8532 / KCTC 2640 / LMG 13131 / VPI 4355).